The following is a 381-amino-acid chain: Neutral protease 2 homolog mep20 (381 aa).

An N-terminal signal peptide occupies residues 1 to 19 (MRFTALASAILPLACNVLA). The propeptide occupies 20–193 (LPAKTGEAPK…ASAVKPLDKR (174 aa)). Cystine bridges form between cysteine 199–cysteine 271 and cysteine 278–cysteine 296. Histidine 321 provides a ligand contact to Zn(2+). Glutamate 322 is a catalytic residue. The Zn(2+) site is built by histidine 325 and aspartate 336.

Belongs to the peptidase M35 family. It depends on Zn(2+) as a cofactor.

The enzyme catalyses Preferential cleavage of bonds with hydrophobic residues in P1'. Also 3-Asn-|-Gln-4 and 8-Gly-|-Ser-9 bonds in insulin B chain.. In terms of biological role, secreted metalloproteinase that allows assimilation of proteinaceous substrates. Shows high activities on basic nuclear substrates such as histone and protamine. The sequence is that of Neutral protease 2 homolog mep20 (mep20) from Aspergillus flavus.